Consider the following 389-residue polypeptide: Serpin-Z3 (389 aa).

The interval glycine 337–alanine 361 is RCL.

The protein belongs to the serpin family.

In terms of biological role, probable serine protease inhibitor. In Arabidopsis thaliana (Mouse-ear cress), this protein is Serpin-Z3.